The sequence spans 391 residues: NAD(P)H-quinone oxidoreductase subunit H, chloroplastic (391 aa).

The protein belongs to the complex I 49 kDa subunit family. In terms of assembly, NDH is composed of at least 16 different subunits, 5 of which are encoded in the nucleus.

The protein localises to the plastid. Its subcellular location is the chloroplast thylakoid membrane. It catalyses the reaction a plastoquinone + NADH + (n+1) H(+)(in) = a plastoquinol + NAD(+) + n H(+)(out). The enzyme catalyses a plastoquinone + NADPH + (n+1) H(+)(in) = a plastoquinol + NADP(+) + n H(+)(out). Its function is as follows. NDH shuttles electrons from NAD(P)H:plastoquinone, via FMN and iron-sulfur (Fe-S) centers, to quinones in the photosynthetic chain and possibly in a chloroplast respiratory chain. The immediate electron acceptor for the enzyme in this species is believed to be plastoquinone. Couples the redox reaction to proton translocation, and thus conserves the redox energy in a proton gradient. The sequence is that of NAD(P)H-quinone oxidoreductase subunit H, chloroplastic from Nephroselmis olivacea (Green alga).